Here is a 225-residue protein sequence, read N- to C-terminus: uncharacterized protein (225 aa).

The chain crosses the membrane as a helical span at residues 12–32 (AGFMMIFVFVIASFLLVLLFF).

Its subcellular location is the cell membrane. This is an uncharacterized protein from Bacillus subtilis (strain 168).